The following is a 563-amino-acid chain: Putative GMC-type oxidoreductase L128 (563 aa).

The first 21 residues, 1–21, serve as a signal peptide directing secretion; sequence MTSSIVLKFFLIATLLVIANS. 48–77 contributes to the FAD binding site; that stretch reads DYVIVGGGAAGSVLLDKCISYGYKCTLIER. Histidine 504 functions as the Proton acceptor in the catalytic mechanism.

It belongs to the GMC oxidoreductase family. It depends on FAD as a cofactor.

The protein is Putative GMC-type oxidoreductase L128 of Acanthamoeba polyphaga mimivirus (APMV).